We begin with the raw amino-acid sequence, 82 residues long: Acyl carrier protein (82 aa).

A Carrier domain is found at 3-77; sequence SSIFDKVQNI…QAIEFIQHAI (75 aa). Ser37 carries the O-(pantetheine 4'-phosphoryl)serine modification.

It belongs to the acyl carrier protein (ACP) family. Post-translationally, 4'-phosphopantetheine is transferred from CoA to a specific serine of apo-ACP by AcpS. This modification is essential for activity because fatty acids are bound in thioester linkage to the sulfhydryl of the prosthetic group.

The protein resides in the plastid. It is found in the chloroplast. The protein operates within lipid metabolism; fatty acid biosynthesis. Functionally, carrier of the growing fatty acid chain in fatty acid biosynthesis. This Gracilaria tenuistipitata var. liui (Red alga) protein is Acyl carrier protein.